We begin with the raw amino-acid sequence, 129 residues long: Small ribosomal subunit protein uS11c (129 aa).

It belongs to the universal ribosomal protein uS11 family. Part of the 30S ribosomal subunit.

It localises to the plastid. The protein localises to the chloroplast. The sequence is that of Small ribosomal subunit protein uS11c from Gracilaria tenuistipitata var. liui (Red alga).